Here is a 297-residue protein sequence, read N- to C-terminus: Phosphatidylserine decarboxylase proenzyme (297 aa).

Active-site charge relay system; for autoendoproteolytic cleavage activity residues include Asp-92, His-149, and Ser-254. Ser-254 serves as the catalytic Schiff-base intermediate with substrate; via pyruvic acid; for decarboxylase activity. Residue Ser-254 is modified to Pyruvic acid (Ser); by autocatalysis.

It belongs to the phosphatidylserine decarboxylase family. PSD-B subfamily. Prokaryotic type I sub-subfamily. Heterodimer of a large membrane-associated beta subunit and a small pyruvoyl-containing alpha subunit. Pyruvate serves as cofactor. Is synthesized initially as an inactive proenzyme. Formation of the active enzyme involves a self-maturation process in which the active site pyruvoyl group is generated from an internal serine residue via an autocatalytic post-translational modification. Two non-identical subunits are generated from the proenzyme in this reaction, and the pyruvate is formed at the N-terminus of the alpha chain, which is derived from the carboxyl end of the proenzyme. The autoendoproteolytic cleavage occurs by a canonical serine protease mechanism, in which the side chain hydroxyl group of the serine supplies its oxygen atom to form the C-terminus of the beta chain, while the remainder of the serine residue undergoes an oxidative deamination to produce ammonia and the pyruvoyl prosthetic group on the alpha chain. During this reaction, the Ser that is part of the protease active site of the proenzyme becomes the pyruvoyl prosthetic group, which constitutes an essential element of the active site of the mature decarboxylase.

It localises to the cell membrane. The catalysed reaction is a 1,2-diacyl-sn-glycero-3-phospho-L-serine + H(+) = a 1,2-diacyl-sn-glycero-3-phosphoethanolamine + CO2. It functions in the pathway phospholipid metabolism; phosphatidylethanolamine biosynthesis; phosphatidylethanolamine from CDP-diacylglycerol: step 2/2. Catalyzes the formation of phosphatidylethanolamine (PtdEtn) from phosphatidylserine (PtdSer). The chain is Phosphatidylserine decarboxylase proenzyme from Bordetella parapertussis (strain 12822 / ATCC BAA-587 / NCTC 13253).